A 258-amino-acid polypeptide reads, in one-letter code: Imidazole glycerol phosphate synthase subunit HisF (258 aa).

Catalysis depends on residues Asp11 and Asp130.

Belongs to the HisA/HisF family. Heterodimer of HisH and HisF.

It localises to the cytoplasm. The catalysed reaction is 5-[(5-phospho-1-deoxy-D-ribulos-1-ylimino)methylamino]-1-(5-phospho-beta-D-ribosyl)imidazole-4-carboxamide + L-glutamine = D-erythro-1-(imidazol-4-yl)glycerol 3-phosphate + 5-amino-1-(5-phospho-beta-D-ribosyl)imidazole-4-carboxamide + L-glutamate + H(+). It functions in the pathway amino-acid biosynthesis; L-histidine biosynthesis; L-histidine from 5-phospho-alpha-D-ribose 1-diphosphate: step 5/9. In terms of biological role, IGPS catalyzes the conversion of PRFAR and glutamine to IGP, AICAR and glutamate. The HisF subunit catalyzes the cyclization activity that produces IGP and AICAR from PRFAR using the ammonia provided by the HisH subunit. In Blochmanniella pennsylvanica (strain BPEN), this protein is Imidazole glycerol phosphate synthase subunit HisF.